Here is a 1435-residue protein sequence, read N- to C-terminus: DNA polymerase III PolC-type (1435 aa).

Residues 420 to 576 (YVVFDVETTG…YDTEATAYIF (157 aa)) form the Exonuclease domain.

Belongs to the DNA polymerase type-C family. PolC subfamily.

It is found in the cytoplasm. It catalyses the reaction DNA(n) + a 2'-deoxyribonucleoside 5'-triphosphate = DNA(n+1) + diphosphate. Functionally, required for replicative DNA synthesis. This DNA polymerase also exhibits 3' to 5' exonuclease activity. The polypeptide is DNA polymerase III PolC-type (Staphylococcus aureus).